Consider the following 46-residue polypeptide: Succinate dehydrogenase subunit 8, mitochondrial (46 aa).

In terms of assembly, component of complex II composed of eight subunits in plants: four classical SDH subunits SDH1, SDH2, SDH3 and SDH4 (a flavoprotein (FP), an iron-sulfur protein (IP), and a cytochrome b composed of a large and a small subunit.), as well as four subunits unknown in mitochondria from bacteria and heterotrophic eukaryotes.

It is found in the mitochondrion inner membrane. The protein operates within carbohydrate metabolism; tricarboxylic acid cycle. The protein is Succinate dehydrogenase subunit 8, mitochondrial of Arabidopsis thaliana (Mouse-ear cress).